Reading from the N-terminus, the 420-residue chain is Glucose-1-phosphate adenylyltransferase (420 aa).

Alpha-D-glucose 1-phosphate contacts are provided by residues Tyr107, Gly172, 187 to 188, and Ser205; that span reads EK.

It belongs to the bacterial/plant glucose-1-phosphate adenylyltransferase family. Homotetramer.

The catalysed reaction is alpha-D-glucose 1-phosphate + ATP + H(+) = ADP-alpha-D-glucose + diphosphate. It participates in glycan biosynthesis; glycogen biosynthesis. In terms of biological role, involved in the biosynthesis of ADP-glucose, a building block required for the elongation reactions to produce glycogen. Catalyzes the reaction between ATP and alpha-D-glucose 1-phosphate (G1P) to produce pyrophosphate and ADP-Glc. This Agrobacterium fabrum (strain C58 / ATCC 33970) (Agrobacterium tumefaciens (strain C58)) protein is Glucose-1-phosphate adenylyltransferase.